We begin with the raw amino-acid sequence, 75 residues long: Exodeoxyribonuclease 7 small subunit (75 aa).

The protein belongs to the XseB family. In terms of assembly, heterooligomer composed of large and small subunits.

It localises to the cytoplasm. The enzyme catalyses Exonucleolytic cleavage in either 5'- to 3'- or 3'- to 5'-direction to yield nucleoside 5'-phosphates.. Functionally, bidirectionally degrades single-stranded DNA into large acid-insoluble oligonucleotides, which are then degraded further into small acid-soluble oligonucleotides. The protein is Exodeoxyribonuclease 7 small subunit of Caldanaerobacter subterraneus subsp. tengcongensis (strain DSM 15242 / JCM 11007 / NBRC 100824 / MB4) (Thermoanaerobacter tengcongensis).